Reading from the N-terminus, the 200-residue chain is Putative glucose-6-phosphate isomerase 2 (200 aa).

H92, H94, E101, and H140 together coordinate Fe cation.

The protein belongs to the archaeal-type GPI family. As to quaternary structure, homodimer. It depends on Fe cation as a cofactor.

The protein localises to the cytoplasm. The enzyme catalyses alpha-D-glucose 6-phosphate = beta-D-fructose 6-phosphate. It participates in carbohydrate degradation; glycolysis; D-glyceraldehyde 3-phosphate and glycerone phosphate from D-glucose: step 2/4. The protein is Putative glucose-6-phosphate isomerase 2 (pgiA2) of Rhizobium meliloti (strain 1021) (Ensifer meliloti).